Consider the following 378-residue polypeptide: UPF0284 protein MK0224 (378 aa).

Belongs to the UPF0284 family.

In Methanopyrus kandleri (strain AV19 / DSM 6324 / JCM 9639 / NBRC 100938), this protein is UPF0284 protein MK0224.